Consider the following 491-residue polypeptide: Putative ABC transporter ATP-binding protein TDE_0906 (491 aa).

ABC transporter domains follow at residues 2-241 (INLN…KQGL) and 267-491 (LTLH…KERL). ATP contacts are provided by residues 36 to 43 (GKSGCGKT) and 300 to 307 (GKNGCGKT).

This sequence belongs to the ABC transporter superfamily.

Its subcellular location is the cell inner membrane. Probably part of an ABC transporter complex. Responsible for energy coupling to the transport system. This is Putative ABC transporter ATP-binding protein TDE_0906 from Treponema denticola (strain ATCC 35405 / DSM 14222 / CIP 103919 / JCM 8153 / KCTC 15104).